The following is a 435-amino-acid chain: MSSFSPREIVSELDRYIIGQKDAKRAVAIALRNRWRRQQLSDELRDEVMPKNILMIGPTGVGKTEISRRLAKLAGAPFVKVEATKFTEVGYVGRDVEQIVRDLVEVGISLVREKRRAEVKAKAHQNAEERVLDALVGTTASPATRDSFRKKLRANELDDKEIEVDVAETGNPGGAFEIPGMPGANIGVLNLSEMFGKALGGRTRKIKTTVKDSYALLVNDESDKLLDNEQIQREAVASAENDGIVFLDEIDKIATREGGIGAGVSREGVQRDLLPLVEGTTVATKYGPVKTDHILFIASGAFHVAKPSDLLPELQGRLPIRVELRALTKEDFRRILTETEASLIRQYKALLETEGVTLDFTEDAIDALAEVAVQLNSNVENIGARRLQTVMERVLDDVSFNAPDRGGQGVTIDADYVRVHVGDLAANTDLSRYIL.

ATP is bound by residues isoleucine 18, 60–65 (GVGKTE), aspartate 248, glutamate 313, and arginine 385.

Belongs to the ClpX chaperone family. HslU subfamily. As to quaternary structure, a double ring-shaped homohexamer of HslV is capped on each side by a ring-shaped HslU homohexamer. The assembly of the HslU/HslV complex is dependent on binding of ATP.

It localises to the cytoplasm. ATPase subunit of a proteasome-like degradation complex; this subunit has chaperone activity. The binding of ATP and its subsequent hydrolysis by HslU are essential for unfolding of protein substrates subsequently hydrolyzed by HslV. HslU recognizes the N-terminal part of its protein substrates and unfolds these before they are guided to HslV for hydrolysis. The protein is ATP-dependent protease ATPase subunit HslU of Sinorhizobium medicae (strain WSM419) (Ensifer medicae).